The sequence spans 592 residues: uncharacterized protein (592 aa).

The N-terminal stretch at 1 to 23 (MRKAPLLRFTLASLALACSQAFA) is a signal peptide. Residue serine 37 is the Nucleophile of the active site. Catalysis depends on residues aspartate 294 and histidine 297. Residues 334–592 (HQDELRNQWQ…PDPGEPGGKP (259 aa)) form the Autotransporter domain. The tract at residues 572 to 592 (FTLTGYTPHTAPDPGEPGGKP) is disordered.

It belongs to the 'GDSL' lipolytic enzyme family.

This is an uncharacterized protein from Pseudomonas putida (Arthrobacter siderocapsulatus).